The sequence spans 210 residues: Chloramphenicol acetyltransferase (210 aa).

H79 is a catalytic residue.

It belongs to the transferase hexapeptide repeat family.

It catalyses the reaction chloramphenicol + acetyl-CoA = chloramphenicol 3-acetate + CoA. This enzyme is an effector of chloramphenicol resistance in bacteria. This Klebsiella aerogenes (Enterobacter aerogenes) protein is Chloramphenicol acetyltransferase (catB4).